The sequence spans 1103 residues: Bifunctional cytochrome P450/NADPH--P450 reductase (1103 aa).

The interval 1–491 (MSTPKAEPVP…SSSEHADHAA (491 aa)) is cytochrome P450. C415 contributes to the heme binding site. Residues 492-1103 (GHGKAGAAKK…KERYTTDIFA (612 aa)) are NADPH--P450 reductase. The Flavodoxin-like domain maps to 508–649 (MHVYYGSNTG…DFDTWGETSF (142 aa)). Residues 514–519 (SNTGTC), 561–564 (SYEG), C596, and T604 each bind FMN. Positions 685–924 (LQLQEGLVVE…RPSHTGFKPP (240 aa)) constitute an FAD-binding FR-type domain.

In the N-terminal section; belongs to the cytochrome P450 family. Heme is required as a cofactor. The cofactor is FAD. It depends on FMN as a cofactor.

It carries out the reaction 2 oxidized [cytochrome P450] + NADPH = 2 reduced [cytochrome P450] + NADP(+) + H(+). The catalysed reaction is an organic molecule + reduced [NADPH--hemoprotein reductase] + O2 = an alcohol + oxidized [NADPH--hemoprotein reductase] + H2O + H(+). In terms of biological role, functions as a fatty acid monooxygenase. Also displays a NADPH-dependent reductase activity in the C-terminal domain, which allows electron transfer from NADPH to the heme iron of the cytochrome P450 N-terminal domain. In Aspergillus oryzae (strain ATCC 42149 / RIB 40) (Yellow koji mold), this protein is Bifunctional cytochrome P450/NADPH--P450 reductase.